The sequence spans 940 residues: Isoleucine--tRNA ligase (940 aa).

The short motif at 58–68 (PYANGDIHIGH) is the 'HIGH' region element. An L-isoleucyl-5'-AMP-binding site is contributed by Glu-564. The 'KMSKS' region signature appears at 605–609 (KMSKS). Residue Lys-608 coordinates ATP. Cys-903, Cys-906, Cys-923, and Cys-926 together coordinate Zn(2+).

Belongs to the class-I aminoacyl-tRNA synthetase family. IleS type 1 subfamily. In terms of assembly, monomer. The cofactor is Zn(2+).

It localises to the cytoplasm. It catalyses the reaction tRNA(Ile) + L-isoleucine + ATP = L-isoleucyl-tRNA(Ile) + AMP + diphosphate. Functionally, catalyzes the attachment of isoleucine to tRNA(Ile). As IleRS can inadvertently accommodate and process structurally similar amino acids such as valine, to avoid such errors it has two additional distinct tRNA(Ile)-dependent editing activities. One activity is designated as 'pretransfer' editing and involves the hydrolysis of activated Val-AMP. The other activity is designated 'posttransfer' editing and involves deacylation of mischarged Val-tRNA(Ile). This chain is Isoleucine--tRNA ligase, found in Shewanella piezotolerans (strain WP3 / JCM 13877).